The chain runs to 260 residues: 5'-nucleotidase SurE (260 aa).

A divalent metal cation is bound by residues aspartate 19, aspartate 20, serine 51, and asparagine 104.

It belongs to the SurE nucleotidase family. The cofactor is a divalent metal cation.

The protein resides in the cytoplasm. The enzyme catalyses a ribonucleoside 5'-phosphate + H2O = a ribonucleoside + phosphate. In terms of biological role, nucleotidase that shows phosphatase activity on nucleoside 5'-monophosphates. This chain is 5'-nucleotidase SurE, found in Paramagnetospirillum magneticum (strain ATCC 700264 / AMB-1) (Magnetospirillum magneticum).